We begin with the raw amino-acid sequence, 372 residues long: Homoserine O-acetyltransferase (372 aa).

The region spanning 43–353 (NAILIFHALT…DKGHDSFLLK (311 aa)) is the AB hydrolase-1 domain. The active-site Nucleophile is the serine 148. Residue arginine 218 participates in substrate binding. Active-site residues include aspartate 314 and histidine 347. Aspartate 348 provides a ligand contact to substrate.

The protein belongs to the AB hydrolase superfamily. MetX family. As to quaternary structure, homodimer.

It is found in the cytoplasm. The catalysed reaction is L-homoserine + acetyl-CoA = O-acetyl-L-homoserine + CoA. The protein operates within amino-acid biosynthesis; L-methionine biosynthesis via de novo pathway; O-acetyl-L-homoserine from L-homoserine: step 1/1. Its function is as follows. Transfers an acetyl group from acetyl-CoA to L-homoserine, forming acetyl-L-homoserine. The sequence is that of Homoserine O-acetyltransferase from Pelagibacter ubique (strain HTCC1062).